A 127-amino-acid chain; its full sequence is MRPVTSFLNRKKAPKNNGDKAEQAAEAFLRKQGLRFVERNFFCRIGEIDLIFLDQNTYVFVEVRFRANNTHGNAAESLGQSKLKKVRNSAALWLQKNNKVNNSSRFDAILFDEKIDSQHLTWLKAVF.

It belongs to the UPF0102 family.

In Marinomonas sp. (strain MWYL1), this protein is UPF0102 protein Mmwyl1_2395.